A 259-amino-acid polypeptide reads, in one-letter code: Global transcriptional regulator CodY (259 aa).

The interval 1 to 155 (MELLAKTRKL…SSTVVGMEIL (155 aa)) is GAF domain. Residues 203–222 (ASKIADRVGITRSVIVNALR) constitute a DNA-binding region (H-T-H motif). Ser-215 carries the post-translational modification Phosphoserine.

This sequence belongs to the CodY family.

The protein localises to the cytoplasm. DNA-binding global transcriptional regulator which is involved in the adaptive response to starvation and acts by directly or indirectly controlling the expression of numerous genes in response to nutrient availability. During rapid exponential growth, CodY is highly active and represses genes whose products allow adaptation to nutrient depletion. This Bacillus anthracis (strain A0248) protein is Global transcriptional regulator CodY.